Here is a 504-residue protein sequence, read N- to C-terminus: Pentatricopeptide repeat-containing protein At1g05600 (504 aa).

12 PPR repeats span residues 45 to 79, 80 to 114, 115 to 145, 151 to 185, 186 to 216, 225 to 259, 260 to 296, 297 to 331, 332 to 367, 368 to 398, 404 to 438, and 439 to 473; these read NGSV…SCEC, KDSV…NCVN, WSLS…YCYG, RITA…GCYP, DRDS…MFWR, DIVV…GLKA, PKRC…GAIP, CLDS…GFEP, TPFI…HCLP, TVGV…MSKQ, NEET…SHFP, and GVET…DMVP.

Belongs to the PPR family. P subfamily.

The sequence is that of Pentatricopeptide repeat-containing protein At1g05600 from Arabidopsis thaliana (Mouse-ear cress).